The primary structure comprises 326 residues: ATP phosphoribosyltransferase regulatory subunit (326 aa).

Belongs to the class-II aminoacyl-tRNA synthetase family. HisZ subfamily. In terms of assembly, heteromultimer composed of HisG and HisZ subunits.

The protein resides in the cytoplasm. It participates in amino-acid biosynthesis; L-histidine biosynthesis; L-histidine from 5-phospho-alpha-D-ribose 1-diphosphate: step 1/9. Functionally, required for the first step of histidine biosynthesis. May allow the feedback regulation of ATP phosphoribosyltransferase activity by histidine. This chain is ATP phosphoribosyltransferase regulatory subunit, found in Streptococcus thermophilus (strain ATCC BAA-491 / LMD-9).